We begin with the raw amino-acid sequence, 109 residues long: Envelope small membrane protein (109 aa).

Topologically, residues 1–11 are virion surface; it reads MTNLLNKSLEE. The helical transmembrane segment at 12-32 threads the bilayer; the sequence is NGSFLTAVYIFVGFVALYLLG. At 33-109 the chain is on the intravirion side; that stretch reads RALQAFVQAA…QDVQRNKLYS (77 aa). The disordered stretch occupies residues 89-109; sequence NGWNNKNPANFQDVQRNKLYS. A compositionally biased stretch (polar residues) spans 90–109; that stretch reads GWNNKNPANFQDVQRNKLYS.

It belongs to the gammacoronaviruses E protein family. Homooligomer. Interacts with the M membrane protein in the budding compartment of the host cell, which is located between endoplasmic reticulum and the Golgi complex. The cytoplasmic tails of both proteins are important for this function. Interacts with Nucleoprotein.

The protein resides in the host Golgi apparatus membrane. In terms of biological role, plays a central role in virus morphogenesis and assembly. Acts as a viroporin and self-assembles in host membranes forming pentameric protein-lipid pores that allow ion transport. Also plays a role in the induction of apoptosis. The polypeptide is Envelope small membrane protein (Avian infectious bronchitis virus (strain KB8523) (IBV)).